Consider the following 221-residue polypeptide: Pectate lyase C (221 aa).

Residues methionine 1–alanine 28 form the signal peptide.

The protein belongs to the polysaccharide lyase 3 family. Requires Ca(2+) as cofactor.

It localises to the secreted. The catalysed reaction is Eliminative cleavage of (1-&gt;4)-alpha-D-galacturonan to give oligosaccharides with 4-deoxy-alpha-D-galact-4-enuronosyl groups at their non-reducing ends.. The enzyme catalyses Eliminative cleavage of (1-&gt;4)-alpha-D-galacturonan methyl ester to give oligosaccharides with 4-deoxy-6-O-methyl-alpha-D-galact-4-enuronosyl groups at their non-reducing ends.. Its pathway is glycan metabolism; pectin degradation; 2-dehydro-3-deoxy-D-gluconate from pectin: step 2/5. Its function is as follows. Catalyzes the depolymerization of both polygalacturonate and pectins of methyl esterification degree from 22 to 89%, with an endo mode of action. In contrast to the majority of pectate lyases, displays high activity on highly methylated pectins. This is Pectate lyase C (pelC) from Bacillus licheniformis (strain ATCC 14580 / DSM 13 / JCM 2505 / CCUG 7422 / NBRC 12200 / NCIMB 9375 / NCTC 10341 / NRRL NRS-1264 / Gibson 46).